A 103-amino-acid chain; its full sequence is Urease subunit beta (103 aa).

Belongs to the urease beta subunit family. In terms of assembly, heterotrimer of UreA (gamma), UreB (beta) and UreC (alpha) subunits. Three heterotrimers associate to form the active enzyme.

Its subcellular location is the cytoplasm. The catalysed reaction is urea + 2 H2O + H(+) = hydrogencarbonate + 2 NH4(+). It functions in the pathway nitrogen metabolism; urea degradation; CO(2) and NH(3) from urea (urease route): step 1/1. The sequence is that of Urease subunit beta from Blochmanniella floridana.